The following is a 259-amino-acid chain: Large ribosomal subunit protein uL3m (259 aa).

The N-terminal 15 residues, 1–15 (MQSRFLISPTLIRTF), are a transit peptide targeting the mitochondrion. The segment covering 176-197 (ASHGASLSHRTPGSTGQNTTPS) has biased composition (polar residues). The disordered stretch occupies residues 176–208 (ASHGASLSHRTPGSTGQNTTPSRVLPGRKMAGH).

This sequence belongs to the universal ribosomal protein uL3 family. As to quaternary structure, component of the mitochondrial large ribosomal subunit (mt-LSU). Mature yeast 74S mitochondrial ribosomes consist of a small (37S) and a large (54S) subunit. The 37S small subunit contains a 15S ribosomal RNA (15S mt-rRNA) and at least 32 different proteins. The 54S large subunit contains a 21S rRNA (21S mt-rRNA) and at least 45 different proteins.

Its subcellular location is the cytoplasm. The protein localises to the mitochondrion. Component of the mitochondrial ribosome (mitoribosome), a dedicated translation machinery responsible for the synthesis of mitochondrial genome-encoded proteins, including at least some of the essential transmembrane subunits of the mitochondrial respiratory chain. The mitoribosomes are attached to the mitochondrial inner membrane and translation products are cotranslationally integrated into the membrane. The polypeptide is Large ribosomal subunit protein uL3m (mrpl9) (Schizosaccharomyces pombe (strain 972 / ATCC 24843) (Fission yeast)).